Here is a 185-residue protein sequence, read N- to C-terminus: V-type ATP synthase subunit E (185 aa).

It belongs to the V-ATPase E subunit family.

Its function is as follows. Produces ATP from ADP in the presence of a proton gradient across the membrane. This chain is V-type ATP synthase subunit E, found in Deinococcus geothermalis (strain DSM 11300 / CIP 105573 / AG-3a).